A 290-amino-acid polypeptide reads, in one-letter code: uncharacterized protein (290 aa).

Transmembrane regions (helical) follow at residues 10–27 (FFVA…LLLI), 32–54 (VNYI…YFFS), 69–91 (ILVP…GVLI), 100–117 (VLAG…FFYF), and 121–143 (YLLM…NFEY). Residues 147 to 183 (VGKERKRILKLKKNYHKLLKEFSNFEREKRMFSNLRK) are a coiled coil.

It is found in the cell membrane. This is an uncharacterized protein from Aquifex aeolicus (strain VF5).